The chain runs to 258 residues: Synapse differentiation-inducing gene protein 1 (258 aa).

Topologically, residues 1–181 (MAGVVEQKSG…NFLVMPPRDH (181 aa)) are cytoplasmic. Serine 137 carries the post-translational modification Phosphoserine. A helical transmembrane segment spans residues 182–202 (LGLSVFSMLCCFWPLGIAAFY). The Extracellular segment spans residues 203–228 (LSHETNKAVAKGDFHQASTSSRRALF). The segment at residues 229 to 249 (LAVLSITIGTGIYVGVAVALI) is an intramembrane region (helical). The Extracellular segment spans residues 250–258 (AYLSKSNHL).

It belongs to the CD225/Dispanin family. Homodimer. Interacts with GRIA1 and GRIA2.

It is found in the cell membrane. Its subcellular location is the early endosome membrane. The protein localises to the postsynaptic density membrane. It localises to the synapse. The protein resides in the cell projection. It is found in the dendrite. Its subcellular location is the dendritic spine. Its function is as follows. May regulate AMPA receptor content at nascent synapses, and have a role in postsynaptic development and maturation. This Bos taurus (Bovine) protein is Synapse differentiation-inducing gene protein 1 (SYNDIG1).